Consider the following 394-residue polypeptide: MTKPIRNVAVLGATGSIGAAALDVLARHPRQFHVSLLAAGQRVDALLALCRTYRPDHAVIGDATLYTTLRDGLNAAGLATKAYAGEAALAELVASTTCDTVVAAIVGAAGLHSTLAAARAGKRLLLANKESLVLAGMLLMREASISGAEIIPIDSEHNAIFQCLRSRTTDGVHRVTLTASGGPFRGHNRTMLAKITPTQAMAHPTWSMGPKISVDSATLMNKGLEVIEAHHLFGLPSEQIDVLVHPQSLVHSLVEFIDGSTLAQLSLPDMRTTLAVGLAWPERIGSGVQGLDLMKHNRLDFEHPDTETFSCLRLARDAMQTGGTAPAVLNAANEIAVSAFLQGRIGFLTIPALIEHALTTLPRYEADTLETLLTVDTETRRITHAALTHFPLPL.

6 residues coordinate NADPH: T14, G15, S16, I17, G40, and N128. K129 contacts 1-deoxy-D-xylulose 5-phosphate. E130 contacts NADPH. D154 contributes to the Mn(2+) binding site. Residues S155, E156, S180, and H203 each contribute to the 1-deoxy-D-xylulose 5-phosphate site. E156 contacts Mn(2+). Position 209 (G209) interacts with NADPH. 1-deoxy-D-xylulose 5-phosphate-binding residues include S216, N221, K222, and E225. A Mn(2+)-binding site is contributed by E225.

The protein belongs to the DXR family. The cofactor is Mg(2+). Requires Mn(2+) as cofactor.

It carries out the reaction 2-C-methyl-D-erythritol 4-phosphate + NADP(+) = 1-deoxy-D-xylulose 5-phosphate + NADPH + H(+). It functions in the pathway isoprenoid biosynthesis; isopentenyl diphosphate biosynthesis via DXP pathway; isopentenyl diphosphate from 1-deoxy-D-xylulose 5-phosphate: step 1/6. Catalyzes the NADPH-dependent rearrangement and reduction of 1-deoxy-D-xylulose-5-phosphate (DXP) to 2-C-methyl-D-erythritol 4-phosphate (MEP). This Xylella fastidiosa (strain M23) protein is 1-deoxy-D-xylulose 5-phosphate reductoisomerase.